We begin with the raw amino-acid sequence, 274 residues long: Thiamine kinase (274 aa).

This sequence belongs to the thiamine kinase family.

It carries out the reaction thiamine + ATP = thiamine phosphate + ADP + H(+). Its pathway is cofactor biosynthesis; thiamine diphosphate biosynthesis; thiamine phosphate from thiamine: step 1/1. Functionally, catalyzes the ATP-dependent phosphorylation of thiamine to thiamine phosphate. Is involved in thiamine salvage. The protein is Thiamine kinase of Salmonella newport (strain SL254).